Reading from the N-terminus, the 689-residue chain is DNA topoisomerase 1 (689 aa).

The Toprim domain maps to Asp-3–Ile-113. Residues Glu-9 and Asp-82 each contribute to the Mg(2+) site. The Topo IA-type catalytic domain occupies Glu-129 to Glu-557. An interaction with DNA region spans residues Ser-163–Gln-168. The O-(5'-phospho-DNA)-tyrosine intermediate role is filled by Tyr-298. The tract at residues Ser-328 to Met-357 is disordered. 3 C4-type zinc fingers span residues Cys-577–Cys-603, Cys-617–Cys-645, and Cys-658–Cys-681.

This sequence belongs to the type IA topoisomerase family. As to quaternary structure, monomer. Mg(2+) is required as a cofactor.

The catalysed reaction is ATP-independent breakage of single-stranded DNA, followed by passage and rejoining.. Its function is as follows. Releases the supercoiling and torsional tension of DNA, which is introduced during the DNA replication and transcription, by transiently cleaving and rejoining one strand of the DNA duplex. Introduces a single-strand break via transesterification at a target site in duplex DNA. The scissile phosphodiester is attacked by the catalytic tyrosine of the enzyme, resulting in the formation of a DNA-(5'-phosphotyrosyl)-enzyme intermediate and the expulsion of a 3'-OH DNA strand. The free DNA strand then undergoes passage around the unbroken strand, thus removing DNA supercoils. Finally, in the religation step, the DNA 3'-OH attacks the covalent intermediate to expel the active-site tyrosine and restore the DNA phosphodiester backbone. This chain is DNA topoisomerase 1, found in Staphylococcus aureus (strain N315).